Consider the following 364-residue polypeptide: tRNA-specific 2-thiouridylase MnmA 1 (364 aa).

Residues 10 to 17 and Met36 contribute to the ATP site; that span reads GMSGGVDS. Residue Cys106 is the Nucleophile of the active site. An intrachain disulfide couples Cys106 to Cys204. Gly130 serves as a coordination point for ATP. Residues 154 to 156 are interaction with tRNA; the sequence is KDQ. Cys204 serves as the catalytic Cysteine persulfide intermediate. Residues 310 to 311 form an interaction with tRNA region; it reads RY.

It belongs to the MnmA/TRMU family.

The protein localises to the cytoplasm. It catalyses the reaction S-sulfanyl-L-cysteinyl-[protein] + uridine(34) in tRNA + AH2 + ATP = 2-thiouridine(34) in tRNA + L-cysteinyl-[protein] + A + AMP + diphosphate + H(+). Catalyzes the 2-thiolation of uridine at the wobble position (U34) of tRNA, leading to the formation of s(2)U34. The polypeptide is tRNA-specific 2-thiouridylase MnmA 1 (Thermoanaerobacter pseudethanolicus (strain ATCC 33223 / 39E) (Clostridium thermohydrosulfuricum)).